Consider the following 876-residue polypeptide: Valine--tRNA ligase (876 aa).

The 'HIGH' region motif lies at 44 to 54 (PNVTGKLHLGH). The 'KMSKS' region signature appears at 520 to 524 (KMSKS). Lysine 523 provides a ligand contact to ATP. Positions 805–876 (LEGLIDMDKE…VKARIEQLKA (72 aa)) form a coiled coil.

Belongs to the class-I aminoacyl-tRNA synthetase family. ValS type 1 subfamily. In terms of assembly, monomer.

The protein localises to the cytoplasm. It carries out the reaction tRNA(Val) + L-valine + ATP = L-valyl-tRNA(Val) + AMP + diphosphate. Catalyzes the attachment of valine to tRNA(Val). As ValRS can inadvertently accommodate and process structurally similar amino acids such as threonine, to avoid such errors, it has a 'posttransfer' editing activity that hydrolyzes mischarged Thr-tRNA(Val) in a tRNA-dependent manner. This chain is Valine--tRNA ligase, found in Staphylococcus aureus (strain bovine RF122 / ET3-1).